A 37-amino-acid chain; its full sequence is Large ribosomal subunit protein bL36A (37 aa).

It belongs to the bacterial ribosomal protein bL36 family.

This chain is Large ribosomal subunit protein bL36A, found in Clavibacter sepedonicus (Clavibacter michiganensis subsp. sepedonicus).